The chain runs to 385 residues: Probable alpha-galactosidase (385 aa).

The first 19 residues, 1–19, serve as a signal peptide directing secretion; the sequence is MMKIAATLLATIALATVNA. 2 disulfide bridges follow: Cys40-Cys72 and Cys119-Cys149. Asp147 (nucleophile) is an active-site residue. Substrate is bound at residue 180–184; the sequence is DWGYE. Asp202 functions as the Proton donor in the catalytic mechanism.

Belongs to the glycosyl hydrolase 27 family.

It catalyses the reaction Hydrolysis of terminal, non-reducing alpha-D-galactose residues in alpha-D-galactosides, including galactose oligosaccharides, galactomannans and galactolipids.. The polypeptide is Probable alpha-galactosidase (melA) (Dictyostelium discoideum (Social amoeba)).